A 270-amino-acid polypeptide reads, in one-letter code: MSGSVLSLARPAAATNGHNLLTKQLNCNGNGTTGGAAKTTVASAITPPKQPQLAAKVIQQSQIVCFDVDSTVICEEGIDELAEYCGKGSEVARVTKEAMGGAMTFQDALKIRLNIIRPTQQQVRDFIQERPSTLSKNVKRFVSHLKAEGKQVYLISGGFDCLIAPVANELGIPLKNVYANKMLFDYLGEYDSFDINQPTSRSGGKAEAIALIRKENSDDSLITMIGDGATDLEAVPPANYFIGFGGNVVRPEVYRRAQYYVTDFEQLMGQ.

Aspartate 67 serves as the catalytic Nucleophile. Mg(2+) is bound by residues aspartate 67 and aspartate 69. Aspartate 69 serves as the catalytic Proton donor. Residues glutamate 76, arginine 112, 156–157, and lysine 205 contribute to the substrate site; that span reads SG. Residue aspartate 227 participates in Mg(2+) binding.

It belongs to the HAD-like hydrolase superfamily. SerB family. It depends on Mg(2+) as a cofactor.

The catalysed reaction is O-phospho-L-serine + H2O = L-serine + phosphate. It catalyses the reaction O-phospho-D-serine + H2O = D-serine + phosphate. The protein operates within amino-acid biosynthesis; L-serine biosynthesis; L-serine from 3-phospho-D-glycerate: step 3/3. Its function is as follows. Catalyzes the last step in the biosynthesis of serine from carbohydrates. The reaction mechanism proceeds via the formation of a phosphoryl-enzyme intermediates. The chain is Phosphoserine phosphatase (aay) from Drosophila melanogaster (Fruit fly).